We begin with the raw amino-acid sequence, 353 residues long: Photosystem II D2 protein (353 aa).

Residue threonine 2 is modified to N-acetylthreonine. Threonine 2 is subject to Phosphothreonine. A helical transmembrane segment spans residues 41 to 61 (CAYFALGGWFTGTTFVTSWYT). Residue histidine 118 coordinates chlorophyll a. The helical transmembrane segment at 125 to 141 (GFMLRQFELARSVQLRP) threads the bilayer. Pheophytin a is bound by residues glutamine 130 and asparagine 143. The chain crosses the membrane as a helical span at residues 153–166 (VFVSVFLIYPLGQS). Position 198 (histidine 198) interacts with chlorophyll a. Residues 208–228 (AALLCAIHGATVENTLFEDGD) traverse the membrane as a helical segment. 2 residues coordinate a plastoquinone: histidine 215 and phenylalanine 262. Histidine 215 is a Fe cation binding site. Histidine 269 is a Fe cation binding site. A helical membrane pass occupies residues 279 to 295 (GLWMSALGVVGLALNLR).

Belongs to the reaction center PufL/M/PsbA/D family. As to quaternary structure, PSII is composed of 1 copy each of membrane proteins PsbA, PsbB, PsbC, PsbD, PsbE, PsbF, PsbH, PsbI, PsbJ, PsbK, PsbL, PsbM, PsbT, PsbX, PsbY, PsbZ, Psb30/Ycf12, at least 3 peripheral proteins of the oxygen-evolving complex and a large number of cofactors. It forms dimeric complexes. The cofactor is The D1/D2 heterodimer binds P680, chlorophylls that are the primary electron donor of PSII, and subsequent electron acceptors. It shares a non-heme iron and each subunit binds pheophytin, quinone, additional chlorophylls, carotenoids and lipids. There is also a Cl(-1) ion associated with D1 and D2, which is required for oxygen evolution. The PSII complex binds additional chlorophylls, carotenoids and specific lipids..

The protein resides in the plastid. Its subcellular location is the chloroplast thylakoid membrane. The catalysed reaction is 2 a plastoquinone + 4 hnu + 2 H2O = 2 a plastoquinol + O2. Functionally, photosystem II (PSII) is a light-driven water:plastoquinone oxidoreductase that uses light energy to abstract electrons from H(2)O, generating O(2) and a proton gradient subsequently used for ATP formation. It consists of a core antenna complex that captures photons, and an electron transfer chain that converts photonic excitation into a charge separation. The D1/D2 (PsbA/PsbD) reaction center heterodimer binds P680, the primary electron donor of PSII as well as several subsequent electron acceptors. D2 is needed for assembly of a stable PSII complex. The polypeptide is Photosystem II D2 protein (Aethionema grandiflorum (Persian stone-cress)).